The sequence spans 476 residues: ATP synthase subunit beta (476 aa).

ATP is bound at residue 152-159; sequence GGAGVGKT.

Belongs to the ATPase alpha/beta chains family. In terms of assembly, F-type ATPases have 2 components, CF(1) - the catalytic core - and CF(0) - the membrane proton channel. CF(1) has five subunits: alpha(3), beta(3), gamma(1), delta(1), epsilon(1). CF(0) has three main subunits: a(1), b(2) and c(9-12). The alpha and beta chains form an alternating ring which encloses part of the gamma chain. CF(1) is attached to CF(0) by a central stalk formed by the gamma and epsilon chains, while a peripheral stalk is formed by the delta and b chains.

It is found in the cell inner membrane. It catalyses the reaction ATP + H2O + 4 H(+)(in) = ADP + phosphate + 5 H(+)(out). In terms of biological role, produces ATP from ADP in the presence of a proton gradient across the membrane. The catalytic sites are hosted primarily by the beta subunits. This is ATP synthase subunit beta from Granulibacter bethesdensis (strain ATCC BAA-1260 / CGDNIH1).